The sequence spans 584 residues: MALAAKERKLSRLGSKGSGGGGGGGSFGARGQRAPAGTQRRLFAAFFAFLFAGAVLFGAAHVIGASFRPVLKTAWPSATLNAVSSERGAQQAGMVSVDAVLPSVHIQHAVALPDHVLLMLRDGSLLPASGQFECLYSPVNSSQLRRQPLSVATLPDGPSLVHCPAGPSRVAVSLSLAQSVPVAPLQWDRLVYTALIDSKDNSTVVFAKGMNLRPGRLGVPSRYECVFGRDFSKPKLVVTSPVVSAAQEIFRCVTPVRIRRYLRMTTGGKNSVNNDDKPMLVSIRTKGRGSSTLPSIAQPEPLPRYNKHWRRKAHSMCVCTMLRNQARFLREWIIYHSRIGVQRWFIYDNNSDDGIEEVLNTMDSSRYNVTRYLWPWMKSQEAGFAHCALRARESCEWVGFIDIDEFLHFPGNQTLQDVLRNYSVKPRIGELRTACHSFGPSGRTKIPKKGVTTGYTCRLAAPERHKSIVRPDALNPSLINVVHHFHLKEGMKYVNIGQGMMLINHYKYQVWEVFKDKFSGRVATYVADWQDEENVGSRDRAPGLGTKPVEPEDWPRRFCEVYDNGLKDFVQKVFTDPHTGNLPW.

The segment covering 1-10 (MALAAKERKL) has biased composition (basic and acidic residues). The interval 1–33 (MALAAKERKLSRLGSKGSGGGGGGGSFGARGQR) is disordered. Over residues 16–28 (KGSGGGGGGGSFG) the composition is skewed to gly residues. A helical membrane pass occupies residues 43–63 (FAAFFAFLFAGAVLFGAAHVI). Residues 314 to 525 (HSMCVCTMLR…DKFSGRVATY (212 aa)) form the GT92 domain.

Belongs to the glycosyltransferase 92 family.

The protein localises to the membrane. This is Glycosyltransferase family 92 protein Os08g0121900 from Oryza sativa subsp. japonica (Rice).